We begin with the raw amino-acid sequence, 1159 residues long: WASH complex subunit 5 (1159 aa).

It belongs to the strumpellin family. In terms of assembly, component of the WASH complex.

Its subcellular location is the early endosome. Functionally, acts at least in part as component of the WASH complex which seems to regulate washc1 nucleation-promoting factor (NPF) activity and is required for its membrane targeting during endosomal sorting. This Danio rerio (Zebrafish) protein is WASH complex subunit 5.